Consider the following 485-residue polypeptide: Calcium-dependent protein kinase 27 (485 aa).

Gly-2 is lipidated: N-myristoyl glycine. The Protein kinase domain occupies 28 to 290; it reads YILGEELGRG…AAEVLGHPWM (263 aa). Residues 34–42 and Lys-57 each bind ATP; that span reads LGRGNFGLT. Asp-156 acts as the Proton acceptor in catalysis. The residue at position 196 (Ser-196) is a Phosphoserine. The autoinhibitory domain stretch occupies residues 295 to 325; the sequence is ASDKPIDGVVLSRLKRFRDANKFKKVVLKFI. EF-hand domains are found at residues 332-367, 368-403, 404-439, and 444-474; these read EEIK…LGSN, LSKT…RYKL, DRDE…DGAG, and IKQI…ESSL. Residues Asp-345, Asp-347, Ser-349, Asn-351, Glu-356, Asp-381, Asp-383, Asn-385, Thr-387, Glu-392, Asp-417, Asp-419, Asp-421, His-423, Glu-428, Asp-452, Asp-454, Asp-456, Lys-458, and Glu-463 each coordinate Ca(2+).

This sequence belongs to the protein kinase superfamily. Ser/Thr protein kinase family. CDPK subfamily.

It is found in the membrane. The catalysed reaction is L-seryl-[protein] + ATP = O-phospho-L-seryl-[protein] + ADP + H(+). It catalyses the reaction L-threonyl-[protein] + ATP = O-phospho-L-threonyl-[protein] + ADP + H(+). Activated by calcium. Autophosphorylation may play an important role in the regulation of the kinase activity. May play a role in signal transduction pathways that involve calcium as a second messenger. This Arabidopsis thaliana (Mouse-ear cress) protein is Calcium-dependent protein kinase 27 (CPK27).